A 414-amino-acid chain; its full sequence is Enterobactin exporter EntS (414 aa).

Topologically, residues 1–21 are cytoplasmic; it reads MNRQSWLLNLSLLKTHPAFRA. The chain crosses the membrane as a helical span at residues 22 to 42; sequence VFLARFISIVSLGLLGVAVPV. The Periplasmic portion of the chain corresponds to 43–55; that stretch reads QIQMMTHSTWQVG. The chain crosses the membrane as a helical span at residues 56-76; sequence LSVTLTGGAMFIGLMVGGVLA. Residues 77–83 are Cytoplasmic-facing; that stretch reads DRYERKK. Residues 84-104 traverse the membrane as a helical segment; that stretch reads VILLARGTCGIGFIGLCVNSL. Residues 105 to 109 are Periplasmic-facing; that stretch reads LPEPS. Residues 110–130 form a helical membrane-spanning segment; sequence LLAIYLLGLWDGFFASLGVTA. Residues 131–156 are Cytoplasmic-facing; that stretch reads LLAATPALVGRENLMQAGAITMLTVR. Residues 157–177 traverse the membrane as a helical segment; it reads LGSVISPMLGGILLASGGVAW. Residue asparagine 178 is a topological domain, periplasmic. The helical transmembrane segment at 179 to 199 threads the bilayer; the sequence is YGLAAAGTFITLLPLLTLPRL. The Cytoplasmic portion of the chain corresponds to 200–218; that stretch reads PVPPQPRENPFIALLAAFR. The helical transmembrane segment at 219-239 threads the bilayer; it reads FLLASPLIGGIALLGGLVTMA. At 240–256 the chain is on the periplasmic side; the sequence is SAVRVLYPALAMSWQMS. Residues 257–277 traverse the membrane as a helical segment; it reads AAQIGLLYAAIPLGAAIGALT. The Cytoplasmic segment spans residues 278 to 287; it reads SGQLAHSVRP. A helical membrane pass occupies residues 288 to 307; sequence GLIMLVSTVGSFLAVGLFAI. Over 308-313 the chain is Periplasmic; sequence MPVWTA. Residues 314 to 336 form a helical membrane-spanning segment; the sequence is GVICLALFGWLSAISSLLQYTLL. The Cytoplasmic portion of the chain corresponds to 337–356; the sequence is QTQTPENMLGRMNGLWTAQN. The helical transmembrane segment at 357–377 threads the bilayer; the sequence is VTGDAIGAALLGGLGAMMTPV. A topological domain (periplasmic) is located at residue alanine 378. A helical membrane pass occupies residues 379 to 399; sequence SASVSGFGLVIIGLLLLLVLG. Residues 400–414 are Cytoplasmic-facing; that stretch reads ELRRFRQTPPVSDAG.

This sequence belongs to the major facilitator superfamily. EntS (TC 2.A.1.38) family.

It localises to the cell inner membrane. Component of an export pathway for enterobactin. This chain is Enterobactin exporter EntS, found in Salmonella choleraesuis (strain SC-B67).